The primary structure comprises 401 residues: Decapping and exoribonuclease protein (401 aa).

Positions 1 to 27 are disordered; it reads MEGNKSMQREKIDRPMKRGPEQNSLSP. The span at 7-20 shows a compositional bias: basic and acidic residues; sequence MQREKIDRPMKRGP. Substrate contacts are provided by residues Arg69, Glu114, and 149–151; that span reads WRG. Glu210 provides a ligand contact to Mg(2+). Substrate contacts are provided by Cys235 and Glu252. 4 residues coordinate Mg(2+): Glu252, Asp254, Glu271, and Leu272. Substrate is bound by residues Lys273 and Gln298.

It belongs to the DXO/Dom3Z family. Mg(2+) serves as cofactor.

The protein localises to the nucleus. It catalyses the reaction a 5'-end triphospho-ribonucleoside in mRNA + H2O = a 5'-end phospho-ribonucleoside in mRNA + diphosphate + H(+). The catalysed reaction is a 5'-end NAD(+)-phospho-ribonucleoside in mRNA + H2O = a 5'-end phospho-ribonucleoside in mRNA + NAD(+) + H(+). The enzyme catalyses a 5'-end NAD(+)-phospho-ribonucleoside in snoRNA + H2O = a 5'-end phospho-ribonucleoside in snoRNA + NAD(+) + H(+). It carries out the reaction a 5'-end (N(7)-methyl 5'-triphosphoguanosine)-ribonucleoside-ribonucleotide in mRNA + H2O = a (N(7)-methyl 5'-triphosphoguanosine)-nucleoside + a 5'-end phospho-ribonucleoside in mRNA + H(+). It catalyses the reaction a 5'-end FAD-phospho-ribonucleoside in mRNA + H2O = a 5'-end phospho-ribonucleoside in mRNA + FAD + H(+). The catalysed reaction is a 5'-end CoA-ribonucleoside in mRNA + H2O = 3'-dephospho-CoA + a 5'-end phospho-ribonucleoside in mRNA + H(+). Its function is as follows. Decapping enzyme for NAD-capped RNAs: specifically hydrolyzes the nicotinamide adenine dinucleotide (NAD) cap from a subset of RNAs by removing the entire NAD moiety from the 5'-end of an NAD-capped RNA. The NAD-cap is present at the 5'-end of some RNAs and snoRNAs. In contrast to the canonical 5'-end N7 methylguanosine (m7G) cap, the NAD cap promotes mRNA decay. Also acts as a non-canonical decapping enzyme that removes the entire cap structure of m7G capped or incompletely capped RNAs and mediates their subsequent degradation. Specifically degrades pre-mRNAs with a defective 5'-end m7G cap and is part of a pre-mRNA capping quality control. Has decapping activity toward incomplete 5'-end m7G cap mRNAs such as unmethylated 5'-end-capped RNA (cap0), while it has no activity toward 2'-O-ribose methylated m7G cap (cap1). Also has 5'-3' exoribonuclease activities: The 5'-end monophosphate RNA is then degraded by the 5'-3' exoribonuclease activity, enabling this enzyme to decap and degrade incompletely capped mRNAs. Also possesses RNA 5'-pyrophosphohydrolase activity by hydrolyzing the 5'-end triphosphate to release pyrophosphates. Exhibits decapping activity towards FAD-capped RNAs. Exhibits decapping activity towards dpCoA-capped RNAs in vitro. This is Decapping and exoribonuclease protein from Xenopus laevis (African clawed frog).